The sequence spans 254 residues: SLA class II histocompatibility antigen, DQ haplotype C alpha chain (254 aa).

The signal sequence occupies residues 1 to 23 (MVPGRVLMWGALALTTVMSACGG). An alpha-1 region spans residues 24 to 120 (EDIAADHVAS…KVPEVTVFSK (97 aa)). The Extracellular segment spans residues 24-216 (EDIAADHVAS…IPAPMSELTE (193 aa)). N-linked (GlcNAc...) asparagine glycosylation is found at asparagine 104 and asparagine 144. An Ig-like C1-type domain is found at 113–204 (PEVTVFSKSP…LDKPLLKHWE (92 aa)). An alpha-2 region spans residues 121–203 (SPVILGQPNT…GLDKPLLKHW (83 aa)). A disulfide bond links cysteine 133 and cysteine 188. The connecting peptide stretch occupies residues 204–216 (EPEIPAPMSELTE). A helical transmembrane segment spans residues 217–239 (TVVCALGLIVGLVGIVVGTVFII). Residues 240–254 (QGLRSGGPSRHQGSL) lie on the Cytoplasmic side of the membrane.

The protein belongs to the MHC class II family.

It localises to the membrane. This chain is SLA class II histocompatibility antigen, DQ haplotype C alpha chain, found in Sus scrofa (Pig).